We begin with the raw amino-acid sequence, 279 residues long: Putative pyruvate, phosphate dikinase regulatory protein (279 aa).

Residue 156–163 participates in ADP binding; the sequence is GVSRTSKT.

This sequence belongs to the pyruvate, phosphate/water dikinase regulatory protein family. PDRP subfamily.

It carries out the reaction N(tele)-phospho-L-histidyl/L-threonyl-[pyruvate, phosphate dikinase] + ADP = N(tele)-phospho-L-histidyl/O-phospho-L-threonyl-[pyruvate, phosphate dikinase] + AMP + H(+). The catalysed reaction is N(tele)-phospho-L-histidyl/O-phospho-L-threonyl-[pyruvate, phosphate dikinase] + phosphate + H(+) = N(tele)-phospho-L-histidyl/L-threonyl-[pyruvate, phosphate dikinase] + diphosphate. Bifunctional serine/threonine kinase and phosphorylase involved in the regulation of the pyruvate, phosphate dikinase (PPDK) by catalyzing its phosphorylation/dephosphorylation. This chain is Putative pyruvate, phosphate dikinase regulatory protein, found in Maricaulis maris (strain MCS10) (Caulobacter maris).